The following is a 95-amino-acid chain: Aspartyl/glutamyl-tRNA(Asn/Gln) amidotransferase subunit C (95 aa).

The protein belongs to the GatC family. As to quaternary structure, heterotrimer of A, B and C subunits.

The catalysed reaction is L-glutamyl-tRNA(Gln) + L-glutamine + ATP + H2O = L-glutaminyl-tRNA(Gln) + L-glutamate + ADP + phosphate + H(+). The enzyme catalyses L-aspartyl-tRNA(Asn) + L-glutamine + ATP + H2O = L-asparaginyl-tRNA(Asn) + L-glutamate + ADP + phosphate + 2 H(+). Its function is as follows. Allows the formation of correctly charged Asn-tRNA(Asn) or Gln-tRNA(Gln) through the transamidation of misacylated Asp-tRNA(Asn) or Glu-tRNA(Gln) in organisms which lack either or both of asparaginyl-tRNA or glutaminyl-tRNA synthetases. The reaction takes place in the presence of glutamine and ATP through an activated phospho-Asp-tRNA(Asn) or phospho-Glu-tRNA(Gln). The protein is Aspartyl/glutamyl-tRNA(Asn/Gln) amidotransferase subunit C of Methylorubrum populi (strain ATCC BAA-705 / NCIMB 13946 / BJ001) (Methylobacterium populi).